A 305-amino-acid polypeptide reads, in one-letter code: N-acetylneuraminate lyase 2 (305 aa).

Aceneuramate is bound by residues Ser-47 and Thr-48. Tyr-137 serves as the catalytic Proton donor. Lys-165 (schiff-base intermediate with substrate) is an active-site residue. Aceneuramate is bound by residues Thr-167, Gly-189, Asp-191, Glu-192, and Ser-208.

Belongs to the DapA family. NanA subfamily. In terms of assembly, homotetramer.

It is found in the cytoplasm. It catalyses the reaction aceneuramate = aldehydo-N-acetyl-D-mannosamine + pyruvate. Its pathway is amino-sugar metabolism; N-acetylneuraminate degradation; D-fructose 6-phosphate from N-acetylneuraminate: step 1/5. Functionally, catalyzes the reversible aldol cleavage of N-acetylneuraminic acid (sialic acid; Neu5Ac) to form pyruvate and N-acetylmannosamine (ManNAc) via a Schiff base intermediate. The sequence is that of N-acetylneuraminate lyase 2 from Escherichia coli O6:H1 (strain CFT073 / ATCC 700928 / UPEC).